The sequence spans 189 residues: Protein Flattop (189 aa).

Residues glutamate 112–lysine 189 form a disordered region. Residues alanine 137 to valine 148 are compositionally biased toward polar residues. Residues asparagine 178–lysine 189 show a composition bias toward pro residues.

Belongs to the Flattop family. As to quaternary structure, microtubule inner protein component of sperm flagellar doublet microtubules. Interacts with DLG3. As to expression, expressed in mono- and multiciliated tissues during planar cell polarity acquisition.

The protein localises to the cytoplasm. Its subcellular location is the cytoskeleton. It localises to the cilium basal body. It is found in the cilium axoneme. The protein resides in the flagellum axoneme. The protein localises to the apical cell membrane. Its function is as follows. Microtubule inner protein (MIP) part of the dynein-decorated doublet microtubules (DMTs) in cilia axoneme. Acts as a regulator of cilium basal body docking and positioning in mono- and multiciliated cells. Regulates basal body docking and cilia formation in multiciliated lung cells. Regulates kinocilium positioning and stereocilia bundle morphogenesis in the inner ear. The protein is Protein Flattop of Mus musculus (Mouse).